The following is a 247-amino-acid chain: GTP cyclohydrolase 1 type 2 homolog (247 aa).

Positions 63, 64, 101, 215, and 219 each coordinate a divalent metal cation.

It belongs to the GTP cyclohydrolase I type 2/NIF3 family. In terms of assembly, homohexamer.

This chain is GTP cyclohydrolase 1 type 2 homolog, found in Buchnera aphidicola subsp. Schizaphis graminum (strain Sg).